The sequence spans 930 residues: MSKKRLYEIAKELGKESKEVVARAKELGLDVKSHSSSVEEAVAAKIAASFKPAAAPKVEAKPAAPKVSAEKKAEKSEPAKPAVAKEEAKPAEPVAPKTEKVAAKPQSRNFKAEREARAKEQAERRKQNKGNNRDQQQNGNRQKNDGRNGGKQGQSNRDNRRFNDQAKKQQGQQKRRNERRQQEDKRSNQVAPRIDFKARAAALKAEQNAEYARSSEERFKQYQAAKEALAQANKRKEPEEIFEEAAKLAEQAQQVQAVVEVVPEKKEPAVDTRRKKQARPDKNRDDYDHEEDGPRKQQKNRSSQNQVRNQKNSNWNNNKKNKKGNNKNNRNQTPKPVTERKFHELPTEFEYTDGMTVAEIAKRIKREPAEIVKKLFMMGVMATQNQSLDGETIELLMVDYGIEAKQKVEVDNADIERFFVEDGYLNEDELVERPPVVTIMGHVDHGKTTLLDTLRNSRVATGEAGGITQHIGAYQIVENGKKITFLDTPGHAAFTSMRARGASVTDITILVVAADDGVMPQTIEAINHSKAANVPIIVAINKIDKPGANPERVIGELAEHGVMSTAWGGDSEFVEISAKFNQNIEELLETVLLVAEIQELKADPTVRAIGTVIEARLDKGKGAVATLLVQQGTLNVQDPIVVGNTFGRVRAMTNDLGRRVKVAGPSTPVSITGLNEAPMAGDHFAVYEDEKSARAAGEERAKRALMKQRQATQRVSLENLFDTLKAGELKSVNVIIKADVQGSVEALSASLQKIDVEGVKVTIVHSAVGAINESDVTLAEASNAFIVGFNVRPTPQARQQAEADDVEIRLHSIIYKVIEEMEEAMKGMLDPEFEEKVIGEAVIRETFKVSKVGTIGGFMVINGKVARDSKVRVIRDGVVIYDGELASLKHYKDDVKEVTNGREGGLMIDGYNDIKMDDVIEAYVMEEIKR.

The span at 50-67 (FKPAAAPKVEAKPAAPKV) shows a compositional bias: low complexity. 2 disordered regions span residues 50–217 (FKPA…SSEE) and 260–346 (EVVP…HELP). Basic and acidic residues-rich tracts occupy residues 68–90 (SAEK…EAKP) and 110–125 (FKAE…AERR). Positions 129–141 (KGNNRDQQQNGNR) are enriched in low complexity. 2 stretches are compositionally biased toward basic and acidic residues: residues 157–167 (RDNRRFNDQAK) and 262–295 (VPEK…DGPR). Residues 309 to 318 (NQKNSNWNNN) are compositionally biased toward low complexity. A compositionally biased stretch (basic and acidic residues) spans 337 to 346 (VTERKFHELP). One can recognise a tr-type G domain in the interval 432–599 (ERPPVVTIMG…TVLLVAEIQE (168 aa)). The tract at residues 441-448 (GHVDHGKT) is G1. A GTP-binding site is contributed by 441-448 (GHVDHGKT). Positions 466–470 (GITQH) are G2. Residues 487–490 (DTPG) are G3. Residues 487–491 (DTPGH) and 541–544 (NKID) each bind GTP. The segment at 541–544 (NKID) is G4. The segment at 577–579 (SAK) is G5.

The protein belongs to the TRAFAC class translation factor GTPase superfamily. Classic translation factor GTPase family. IF-2 subfamily.

The protein resides in the cytoplasm. Functionally, one of the essential components for the initiation of protein synthesis. Protects formylmethionyl-tRNA from spontaneous hydrolysis and promotes its binding to the 30S ribosomal subunits. Also involved in the hydrolysis of GTP during the formation of the 70S ribosomal complex. The chain is Translation initiation factor IF-2 from Streptococcus pneumoniae (strain CGSP14).